Consider the following 212-residue polypeptide: Pyridoxine/pyridoxamine 5'-phosphate oxidase (212 aa).

Substrate is bound by residues 8–11 (RREY) and Lys-66. Residues 61–66 (RIVLLK), 76–77 (FT), Arg-82, Lys-83, and Gln-105 each bind FMN. 3 residues coordinate substrate: Tyr-123, Arg-127, and Ser-131. Residues 140–141 (QS) and Trp-185 each bind FMN. Substrate is bound at residue 191-193 (RLH). Arg-195 contacts FMN.

The protein belongs to the pyridoxamine 5'-phosphate oxidase family. In terms of assembly, homodimer. It depends on FMN as a cofactor.

It catalyses the reaction pyridoxamine 5'-phosphate + O2 + H2O = pyridoxal 5'-phosphate + H2O2 + NH4(+). The catalysed reaction is pyridoxine 5'-phosphate + O2 = pyridoxal 5'-phosphate + H2O2. Its pathway is cofactor metabolism; pyridoxal 5'-phosphate salvage; pyridoxal 5'-phosphate from pyridoxamine 5'-phosphate: step 1/1. The protein operates within cofactor metabolism; pyridoxal 5'-phosphate salvage; pyridoxal 5'-phosphate from pyridoxine 5'-phosphate: step 1/1. Its function is as follows. Catalyzes the oxidation of either pyridoxine 5'-phosphate (PNP) or pyridoxamine 5'-phosphate (PMP) into pyridoxal 5'-phosphate (PLP). This chain is Pyridoxine/pyridoxamine 5'-phosphate oxidase, found in Shewanella sp. (strain MR-4).